The sequence spans 315 residues: Methionyl-tRNA formyltransferase (315 aa).

110–113 (SLLP) lines the (6S)-5,6,7,8-tetrahydrofolate pocket.

The protein belongs to the Fmt family.

The enzyme catalyses L-methionyl-tRNA(fMet) + (6R)-10-formyltetrahydrofolate = N-formyl-L-methionyl-tRNA(fMet) + (6S)-5,6,7,8-tetrahydrofolate + H(+). In terms of biological role, attaches a formyl group to the free amino group of methionyl-tRNA(fMet). The formyl group appears to play a dual role in the initiator identity of N-formylmethionyl-tRNA by promoting its recognition by IF2 and preventing the misappropriation of this tRNA by the elongation apparatus. This Cutibacterium acnes (strain DSM 16379 / KPA171202) (Propionibacterium acnes) protein is Methionyl-tRNA formyltransferase.